The primary structure comprises 512 residues: Calcium-dependent protein kinase 18 (512 aa).

The tract at residues 1–25 (MGLCSSSSARRDAGTPGGGNGAGNK) is disordered. The N-myristoyl glycine moiety is linked to residue glycine 2. The Protein kinase domain maps to 52-312 (YALGKLLGHG…AAQALSHEWV (261 aa)). ATP contacts are provided by residues 58–66 (LGHGQFGYT) and lysine 81. Catalysis depends on aspartate 178, which acts as the Proton acceptor. The autoinhibitory domain stretch occupies residues 318 to 348 (ASDIPLDISVLHNMRQFVKYSRFKQFALRAL). EF-hand domains follow at residues 355–390 (EELS…DVPW), 392–427 (LKGP…VHQL), 434–469 (KWKS…KGSI), and 472–499 (LLEE…ASMS). Ca(2+)-binding residues include aspartate 368, aspartate 370, asparagine 372, threonine 374, glutamate 379, aspartate 405, asparagine 407, aspartate 409, glutamate 416, aspartate 447, aspartate 449, aspartate 451, tyrosine 453, glutamate 458, aspartate 477, aspartate 479, aspartate 481, lysine 483, and glutamate 488.

The protein belongs to the protein kinase superfamily. Ser/Thr protein kinase family. CDPK subfamily. In terms of assembly, interacts with MPK5. In terms of processing, autophosphorylated. Phosphorylated by MPK5.

It localises to the cell membrane. It carries out the reaction L-seryl-[protein] + ATP = O-phospho-L-seryl-[protein] + ADP + H(+). It catalyses the reaction L-threonyl-[protein] + ATP = O-phospho-L-threonyl-[protein] + ADP + H(+). Activated by calcium. Autophosphorylation may play an important role in the regulation of the kinase activity. May play a role in signal transduction pathways that involve calcium as a second messenger. Functions upstream of MPK5 in a signaling pathway that represses defense gene expression and negatively regulates resistance to rice blast fungus. Phosphorylates MPK5 at Thr-14 and Thr-32 and activates MPK5 independently of MAP kinase kinase (MKK) phosphorylation. May be involved in arbuscular mycorrhizal presymbiotic phase signaling. Phosphorylates the elicitor-responsive protein ERG1 in vitro. Phosphorylation is calcium-dependent. In Oryza sativa subsp. japonica (Rice), this protein is Calcium-dependent protein kinase 18.